Here is a 220-residue protein sequence, read N- to C-terminus: UPF0319 protein CKO_02102 (220 aa).

A signal peptide spans 1–20; the sequence is MKTGIITMLFVLYLPVTAFA.

This sequence belongs to the UPF0319 family.

The protein is UPF0319 protein CKO_02102 of Citrobacter koseri (strain ATCC BAA-895 / CDC 4225-83 / SGSC4696).